Here is a 246-residue protein sequence, read N- to C-terminus: N-alpha-acetyltransferase 11 (246 aa).

The interaction with NAA15 stretch occupies residues 1-58; that stretch reads MNIRNARPEDLMNMQHCNLLCLPENYQMKYYFYHGLSWPQLSYIAEDEDGKIVGYVLA. The N-acetyltransferase domain occupies 1-152; it reads MNIRNARPED…DAYAMKRDLA (152 aa). The segment at 175–246 is disordered; the sequence is EENQEAQDST…DSSEYLDSTS (72 aa). Positions 230-246 are enriched in polar residues; the sequence is SHSTDVQDSSEYLDSTS.

This sequence belongs to the acetyltransferase family. ARD1 subfamily. In terms of assembly, component of the N-terminal acetyltransferase A (NatA) complex composed of NAA11 and NAA15. Interacts with HIF1A.

The protein localises to the cytoplasm. It is found in the nucleus. It carries out the reaction N-terminal glycyl-[protein] + acetyl-CoA = N-terminal N(alpha)-acetylglycyl-[protein] + CoA + H(+). The catalysed reaction is N-terminal L-alanyl-[protein] + acetyl-CoA = N-terminal N(alpha)-acetyl-L-alanyl-[protein] + CoA + H(+). It catalyses the reaction N-terminal L-seryl-[protein] + acetyl-CoA = N-terminal N(alpha)-acetyl-L-seryl-[protein] + CoA + H(+). The enzyme catalyses N-terminal L-valyl-[protein] + acetyl-CoA = N-terminal N(alpha)-acetyl-L-valyl-[protein] + CoA + H(+). It carries out the reaction N-terminal L-cysteinyl-[protein] + acetyl-CoA = N-terminal N(alpha)-acetyl-L-cysteinyl-[protein] + CoA + H(+). The catalysed reaction is N-terminal L-threonyl-[protein] + acetyl-CoA = N-terminal N(alpha)-acetyl-L-threonyl-[protein] + CoA + H(+). Functionally, displays alpha (N-terminal) acetyltransferase activity. Proposed alternative catalytic subunit of the N-terminal acetyltransferase A (NatA) complex. This Rattus norvegicus (Rat) protein is N-alpha-acetyltransferase 11 (Naa11).